Here is a 204-residue protein sequence, read N- to C-terminus: Large ribosomal subunit protein bL25 (204 aa).

It belongs to the bacterial ribosomal protein bL25 family. CTC subfamily. Part of the 50S ribosomal subunit; part of the 5S rRNA/L5/L18/L25 subcomplex. Contacts the 5S rRNA. Binds to the 5S rRNA independently of L5 and L18.

This is one of the proteins that binds to the 5S RNA in the ribosome where it forms part of the central protuberance. The protein is Large ribosomal subunit protein bL25 of Burkholderia pseudomallei (strain 668).